The following is a 413-amino-acid chain: Putative ankyrin repeat protein L92 (413 aa).

ANK repeat units lie at residues 1–28 (MCAC…DINC), 32–67 (DGMS…DVNL), 68–104 (TVDG…LFES), 105–134 (DDDD…NIEA), 137–170 (DGET…KTNI), 174–208 (DRKT…NINY), 212–242 (IGET…NPNI), and 246–275 (SGNT…SPEI).

The chain is Putative ankyrin repeat protein L92 from Acanthamoeba polyphaga mimivirus (APMV).